The following is a 35-amino-acid chain: Photosystem II reaction center protein T (35 aa).

The helical transmembrane segment at 3-23 (ALVYTFLLVSTLGIIFFAIFF) threads the bilayer.

It belongs to the PsbT family. As to quaternary structure, PSII is composed of 1 copy each of membrane proteins PsbA, PsbB, PsbC, PsbD, PsbE, PsbF, PsbH, PsbI, PsbJ, PsbK, PsbL, PsbM, PsbT, PsbY, PsbZ, Psb30/Ycf12, at least 3 peripheral proteins of the oxygen-evolving complex and a large number of cofactors. It forms dimeric complexes.

It is found in the plastid. Its subcellular location is the chloroplast thylakoid membrane. Its function is as follows. Found at the monomer-monomer interface of the photosystem II (PS II) dimer, plays a role in assembly and dimerization of PSII. PSII is a light-driven water plastoquinone oxidoreductase, using light energy to abstract electrons from H(2)O, generating a proton gradient subsequently used for ATP formation. The sequence is that of Photosystem II reaction center protein T from Taxus brevifolia (Pacific yew).